The sequence spans 75 residues: Metallothionein-like protein 1B (75 aa).

The protein belongs to the metallothionein superfamily. Type 15 family.

Its function is as follows. Metallothioneins have a high content of cysteine residues that bind various heavy metals. The polypeptide is Metallothionein-like protein 1B (MT1B) (Vicia faba (Broad bean)).